The primary structure comprises 390 residues: Cell adhesion molecule 4 (390 aa).

A signal peptide spans 1 to 27; the sequence is MAPALTALNRCFVLGILLLVTAGTAFS. The Ig-like V-type domain maps to 28–122; it reads QEVQAENVTV…DTHHQIATLT (95 aa). At 28–326 the chain is on the extracellular side; the sequence is QEVQAENVTV…IEAQTQVPYA (299 aa). N-linked (GlcNAc...) asparagine glycosylation is found at Asn-34 and Asn-70. Cystine bridges form between Cys-47-Cys-107, Cys-148-Cys-202, and Cys-247-Cys-293. Ig-like C2-type domains follow at residues 127–219 and 226–309; these read PDNP…TQYE and PTAS…YVLV. Residues Asn-264 and Asn-288 are each glycosylated (N-linked (GlcNAc...) asparagine). The helical transmembrane segment at 327 to 347 threads the bilayer; the sequence is VIGGILALLVFLVICILIVMV. Residues 348–390 are Cytoplasmic-facing; it reads WCSVRQKGSYLTHEASGLDEHGEAREAFLNGGENHKRKEEFFI.

This sequence belongs to the nectin family.

The protein resides in the membrane. In terms of biological role, involved in the cell-cell adhesion. This is Cell adhesion molecule 4 (cadm4) from Xenopus laevis (African clawed frog).